A 226-amino-acid chain; its full sequence is Apoptosis regulator OPG045 (226 aa).

It belongs to the orthopoxvirus OPG045 family. Homodimer. Interacts with host pro-apoptotic protein BCL2L11 (via BH3 domain). Interacts with host NLRP1. Interacts with host BAK.

The protein resides in the host mitochondrion outer membrane. The protein localises to the host cytoplasm. Plays a role in evading host innate immune response by inhibiting host inflammasome activation. Interacts with and inhibits NLR-mediated interleukin-1 beta/IL1B production in infected cells. At the host mitochondria outer membrane, interacts with the BH3 domain of host BAK and prevents BAK from binding active BAX. In turn, host apoptosis is inhibited. This Vaccinia virus (strain Copenhagen) (VACV) protein is Apoptosis regulator OPG045 (OPG045).